A 149-amino-acid chain; its full sequence is Large ribosomal subunit protein bL9 (149 aa).

The protein belongs to the bacterial ribosomal protein bL9 family.

In terms of biological role, binds to the 23S rRNA. The polypeptide is Large ribosomal subunit protein bL9 (Chromobacterium violaceum (strain ATCC 12472 / DSM 30191 / JCM 1249 / CCUG 213 / NBRC 12614 / NCIMB 9131 / NCTC 9757 / MK)).